A 388-amino-acid chain; its full sequence is Succinate--CoA ligase [ADP-forming] subunit beta (388 aa).

Residues 9–244 enclose the ATP-grasp domain; the sequence is KQLFAEYGLP…PSQDDAREAH (236 aa). ATP contacts are provided by residues Lys46, 53 to 55, Glu99, Thr102, and Glu107; that span reads GRG. 2 residues coordinate Mg(2+): Asn199 and Asp213. Substrate is bound by residues Asn264 and 321-323; that span reads GIV.

The protein belongs to the succinate/malate CoA ligase beta subunit family. In terms of assembly, heterotetramer of two alpha and two beta subunits. Requires Mg(2+) as cofactor.

The catalysed reaction is succinate + ATP + CoA = succinyl-CoA + ADP + phosphate. The enzyme catalyses GTP + succinate + CoA = succinyl-CoA + GDP + phosphate. It participates in carbohydrate metabolism; tricarboxylic acid cycle; succinate from succinyl-CoA (ligase route): step 1/1. Its function is as follows. Succinyl-CoA synthetase functions in the citric acid cycle (TCA), coupling the hydrolysis of succinyl-CoA to the synthesis of either ATP or GTP and thus represents the only step of substrate-level phosphorylation in the TCA. The beta subunit provides nucleotide specificity of the enzyme and binds the substrate succinate, while the binding sites for coenzyme A and phosphate are found in the alpha subunit. This is Succinate--CoA ligase [ADP-forming] subunit beta from Pseudomonas aeruginosa (strain UCBPP-PA14).